Consider the following 265-residue polypeptide: Cytochrome c oxidase subunit 3 (265 aa).

Transmembrane regions (helical) follow at residues 16 to 36 (PWPISGSLGALATTVGGVMYM), 41 to 61 (GGATLLSLGLIFLLYTMFVWW), 84 to 104 (YGSILFIVSEVMSFFLFFWAS), 162 to 182 (AVYALVATVLLALVSTGFQGM), 200 to 220 (FLLATGFHGFHVIIGTLFLIV), and 242 to 262 (AWYWHFVDVVRLFPFVSIYWW).

This sequence belongs to the cytochrome c oxidase subunit 3 family. As to quaternary structure, component of the cytochrome c oxidase (complex IV, CIV), a multisubunit enzyme composed of a catalytic core of 3 subunits and several supernumerary subunits. The complex exists as a monomer or a dimer and forms supercomplexes (SCs) in the inner mitochondrial membrane with ubiquinol-cytochrome c oxidoreductase (cytochrome b-c1 complex, complex III, CIII).

The protein localises to the mitochondrion inner membrane. It catalyses the reaction 4 Fe(II)-[cytochrome c] + O2 + 8 H(+)(in) = 4 Fe(III)-[cytochrome c] + 2 H2O + 4 H(+)(out). In terms of biological role, component of the cytochrome c oxidase, the last enzyme in the mitochondrial electron transport chain which drives oxidative phosphorylation. The respiratory chain contains 3 multisubunit complexes succinate dehydrogenase (complex II, CII), ubiquinol-cytochrome c oxidoreductase (cytochrome b-c1 complex, complex III, CIII) and cytochrome c oxidase (complex IV, CIV), that cooperate to transfer electrons derived from NADH and succinate to molecular oxygen, creating an electrochemical gradient over the inner membrane that drives transmembrane transport and the ATP synthase. Cytochrome c oxidase is the component of the respiratory chain that catalyzes the reduction of oxygen to water. Electrons originating from reduced cytochrome c in the intermembrane space (IMS) are transferred via the dinuclear copper A center (CU(A)) of subunit 2 and heme A of subunit 1 to the active site in subunit 1, a binuclear center (BNC) formed by heme A3 and copper B (CU(B)). The BNC reduces molecular oxygen to 2 water molecules using 4 electrons from cytochrome c in the IMS and 4 protons from the mitochondrial matrix. This Zea mays (Maize) protein is Cytochrome c oxidase subunit 3 (COX3).